A 96-amino-acid chain; its full sequence is Putative regulatory protein DET0036 (96 aa).

This sequence belongs to the RemA family.

This Dehalococcoides mccartyi (strain ATCC BAA-2266 / KCTC 15142 / 195) (Dehalococcoides ethenogenes (strain 195)) protein is Putative regulatory protein DET0036.